A 290-amino-acid chain; its full sequence is Small ribosomal subunit protein uS2 (290 aa).

This sequence belongs to the universal ribosomal protein uS2 family. Component of the small ribosomal subunit. Mature ribosomes consist of a small (40S) and a large (60S) subunit. The 40S subunit contains about 33 different proteins and 1 molecule of RNA (18S). The 60S subunit contains about 49 different proteins and 3 molecules of RNA (28S, 5.8S and 5S). Interacts with ribosomal protein S21.

The protein resides in the cytoplasm. In terms of biological role, required for the assembly and/or stability of the 40S ribosomal subunit. Required for the processing of the 20S rRNA-precursor to mature 18S rRNA in a late step of the maturation of 40S ribosomal subunits. The sequence is that of Small ribosomal subunit protein uS2 from Culex quinquefasciatus (Southern house mosquito).